The sequence spans 47 residues: Lysis protein for colicin E8 (47 aa).

Residues M1–A19 form the signal peptide. A lipid anchor (N-palmitoyl cysteine) is attached at C20. C20 is lipidated: S-diacylglycerol cysteine.

It localises to the cell outer membrane. Lysis proteins are required for both colicin release and partial cell lysis. The sequence is that of Lysis protein for colicin E8 (lys) from Escherichia coli.